Here is a 421-residue protein sequence, read N- to C-terminus: D-amino acid dehydrogenase (421 aa).

Position 3-17 (3-17 (VIVLGSGVIGVASAY)) interacts with FAD.

Belongs to the DadA oxidoreductase family. Requires FAD as cofactor.

The enzyme catalyses a D-alpha-amino acid + A + H2O = a 2-oxocarboxylate + AH2 + NH4(+). The protein operates within amino-acid degradation; D-alanine degradation; NH(3) and pyruvate from D-alanine: step 1/1. In terms of biological role, oxidative deamination of D-amino acids. This chain is D-amino acid dehydrogenase, found in Acinetobacter baumannii (strain ATCC 17978 / DSM 105126 / CIP 53.77 / LMG 1025 / NCDC KC755 / 5377).